Consider the following 288-residue polypeptide: Acetyl-coenzyme A carboxylase carboxyl transferase subunit beta (288 aa).

The region spanning 32-288 (LFAKCPACKH…LELHTEVENV (257 aa)) is the CoA carboxyltransferase N-terminal domain. 4 residues coordinate Zn(2+): C36, C39, C54, and C57. A C4-type zinc finger spans residues 36-57 (CPACKHTIYQKDLGKNKVCPNC).

The protein belongs to the AccD/PCCB family. Acetyl-CoA carboxylase is a heterohexamer composed of biotin carboxyl carrier protein (AccB), biotin carboxylase (AccC) and two subunits each of ACCase subunit alpha (AccA) and ACCase subunit beta (AccD). Zn(2+) serves as cofactor.

It is found in the cytoplasm. The catalysed reaction is N(6)-carboxybiotinyl-L-lysyl-[protein] + acetyl-CoA = N(6)-biotinyl-L-lysyl-[protein] + malonyl-CoA. The protein operates within lipid metabolism; malonyl-CoA biosynthesis; malonyl-CoA from acetyl-CoA: step 1/1. Its function is as follows. Component of the acetyl coenzyme A carboxylase (ACC) complex. Biotin carboxylase (BC) catalyzes the carboxylation of biotin on its carrier protein (BCCP) and then the CO(2) group is transferred by the transcarboxylase to acetyl-CoA to form malonyl-CoA. In Lactococcus lactis subsp. cremoris (strain MG1363), this protein is Acetyl-coenzyme A carboxylase carboxyl transferase subunit beta.